A 429-amino-acid chain; its full sequence is Adenylosuccinate synthetase (429 aa).

Residues 12 to 18 and 40 to 42 contribute to the GTP site; these read GDEGKGK and GHT. The Proton acceptor role is filled by aspartate 13. Residues aspartate 13 and glycine 40 each contribute to the Mg(2+) site. Residues 13 to 16, 38 to 41, threonine 128, arginine 142, glutamine 223, threonine 238, and arginine 302 each bind IMP; these read DEGK and NAGH. The Proton donor role is filled by histidine 41. Residue 298–304 participates in substrate binding; that stretch reads TVTGRPR. GTP contacts are provided by residues arginine 304, 330-332, and 412-414; these read LLD and SVG.

The protein belongs to the adenylosuccinate synthetase family. Homodimer. The cofactor is Mg(2+).

The protein resides in the cytoplasm. The enzyme catalyses IMP + L-aspartate + GTP = N(6)-(1,2-dicarboxyethyl)-AMP + GDP + phosphate + 2 H(+). It functions in the pathway purine metabolism; AMP biosynthesis via de novo pathway; AMP from IMP: step 1/2. Plays an important role in the de novo pathway of purine nucleotide biosynthesis. Catalyzes the first committed step in the biosynthesis of AMP from IMP. The chain is Adenylosuccinate synthetase from Lactobacillus gasseri (strain ATCC 33323 / DSM 20243 / BCRC 14619 / CIP 102991 / JCM 1131 / KCTC 3163 / NCIMB 11718 / NCTC 13722 / AM63).